Here is a 79-residue protein sequence, read N- to C-terminus: Beta-hexatoxin-Mg1a (79 aa).

The N-terminal stretch at 1–20 (MKAPATTLILVMSLISVLWA) is a signal peptide. The propeptide occupies 21 to 50 (TPDLEEGDLLAELGDLIATDDEYPMKPEER). 3 disulfide bridges follow: cysteine 52/cysteine 66, cysteine 59/cysteine 71, and cysteine 65/cysteine 76.

Belongs to the neurotoxin 15 family. 01 (magi-5) subfamily. In terms of tissue distribution, expressed by the venom gland.

It is found in the secreted. In terms of biological role, insect and vertebrate active toxin. Binds to site 4 of mammalian voltage-gated sodium channels and shifts the activation voltage of the mammalian Nav1.2a/SCN2A channel to more hyperpolarized voltages, whereas the insect channel, DmNav1 (para), is not affected. Competes for binding at site 3 of the insect sodium channel. Causes temporary paralysis when injected into lepidopteran larvae at 8.6 nmol/g. A low intracranial injection dose into mice causes lacrimation, closure of the eyes and sweating. A high injection dose causes extensive lacrimation and death. The protein is Beta-hexatoxin-Mg1a of Macrothele gigas (Japanese funnel web spider).